The sequence spans 269 residues: Ribosomal RNA small subunit methyltransferase A (269 aa).

The S-adenosyl-L-methionine site is built by H12, L14, G39, E60, D81, and N103.

This sequence belongs to the class I-like SAM-binding methyltransferase superfamily. rRNA adenine N(6)-methyltransferase family. RsmA subfamily.

Its subcellular location is the cytoplasm. It carries out the reaction adenosine(1518)/adenosine(1519) in 16S rRNA + 4 S-adenosyl-L-methionine = N(6)-dimethyladenosine(1518)/N(6)-dimethyladenosine(1519) in 16S rRNA + 4 S-adenosyl-L-homocysteine + 4 H(+). Its function is as follows. Specifically dimethylates two adjacent adenosines (A1518 and A1519) in the loop of a conserved hairpin near the 3'-end of 16S rRNA in the 30S particle. May play a critical role in biogenesis of 30S subunits. The protein is Ribosomal RNA small subunit methyltransferase A of Leptothrix cholodnii (strain ATCC 51168 / LMG 8142 / SP-6) (Leptothrix discophora (strain SP-6)).